Reading from the N-terminus, the 114-residue chain is Large ribosomal subunit protein P1 (114 aa).

A disordered region spans residues 55 to 114; sequence EEAAAAPAAAPAASGSDDEAAADDGDDDEEADADEAAEAEDAGDDDDEEPSGEGLGDLFG. Residues 56 to 69 show a composition bias toward low complexity; that stretch reads EAAAAPAAAPAASG. Over residues 70 to 105 the composition is skewed to acidic residues; the sequence is SDDEAAADDGDDDEEADADEAAEAEDAGDDDDEEPS.

It belongs to the eukaryotic ribosomal protein P1/P2 family. As to quaternary structure, part of the 50S ribosomal subunit. Homodimer, it forms part of the ribosomal stalk which helps the ribosome interact with GTP-bound translation factors. Forms a heptameric uL10/P0(P1)2(P1)2(P1)2 complex, where uL10/P0 forms an elongated spine to which the P1 dimers bind in a sequential fashion.

Functionally, forms part of the ribosomal stalk, playing a central role in the interaction of the ribosome with GTP-bound translation factors. This is Large ribosomal subunit protein P1 from Halobacterium salinarum (strain ATCC 700922 / JCM 11081 / NRC-1) (Halobacterium halobium).